A 281-amino-acid polypeptide reads, in one-letter code: Phosphatidylglycerol--prolipoprotein diacylglyceryl transferase (281 aa).

The next 4 helical transmembrane spans lie at 23–43 (IGPL…LFAW), 71–91 (FVIW…VLFY), 107–127 (WDGG…MILF), and 133–153 (ILVW…LGVV). Position 154 (Arg154) interacts with a 1,2-diacyl-sn-glycero-3-phospho-(1'-sn-glycerol). 3 helical membrane-spanning segments follow: residues 189-209 (LYEA…LVWG), 217-237 (GFVA…VEFF), and 247-267 (LFGG…LLGL).

This sequence belongs to the Lgt family.

It localises to the cell inner membrane. The catalysed reaction is L-cysteinyl-[prolipoprotein] + a 1,2-diacyl-sn-glycero-3-phospho-(1'-sn-glycerol) = an S-1,2-diacyl-sn-glyceryl-L-cysteinyl-[prolipoprotein] + sn-glycerol 1-phosphate + H(+). It participates in protein modification; lipoprotein biosynthesis (diacylglyceryl transfer). Functionally, catalyzes the transfer of the diacylglyceryl group from phosphatidylglycerol to the sulfhydryl group of the N-terminal cysteine of a prolipoprotein, the first step in the formation of mature lipoproteins. This Brucella canis (strain ATCC 23365 / NCTC 10854 / RM-666) protein is Phosphatidylglycerol--prolipoprotein diacylglyceryl transferase.